The chain runs to 316 residues: Golgi to ER traffic protein 2 (316 aa).

The disordered stretch occupies residues 1–75 (MATELSDAEK…SDEEVEKSTK (75 aa)). Over 1 to 167 (MATELSDAEK…LKYYKFKVSK (167 aa)) the chain is Cytoplasmic. A compositionally biased stretch (basic and acidic residues) spans 7-19 (DAEKRKLLRERRQ). 2 stretches are compositionally biased toward polar residues: residues 22–48 (FSNG…STSV) and 56–65 (PSGNKKSSNV). Residues 168–187 (LKSYIILIKWALLAPYVYFI) form a helical membrane-spanning segment. Topologically, residues 188–209 (MHPNPTVLQASNLLSQIVERSN) are lumenal. The helical transmembrane segment at 210-229 (FFSIFTGLEIVFISIYYQML) threads the bilayer. Over 230–276 (KKLQRDNNVTATQNAGGILKYLTMIPEGILPIRNIQGKIGLALEYFD) the chain is Cytoplasmic. The helical transmembrane segment at 277-297 (VASMYVTDICFVLVLFGVMKY) threads the bilayer. Residues 298–316 (YHSSFPISVPIEPPIAGIQ) are Lumenal-facing.

It belongs to the GET2 family. In terms of assembly, component of the Golgi to ER traffic (GET) complex, which is composed of GET1, GET2 and GET3. Within the complex, GET1 and GET2 form a heterotetramer which is stabilized by phosphatidylinositol binding and which binds to the GET3 homodimer.

It localises to the endoplasmic reticulum membrane. The protein resides in the golgi apparatus membrane. Its function is as follows. Required for the post-translational delivery of tail-anchored (TA) proteins to the endoplasmic reticulum. Together with GET1, acts as a membrane receptor for soluble GET3, which recognizes and selectively binds the transmembrane domain of TA proteins in the cytosol. The GET complex cooperates with the HDEL receptor ERD2 to mediate the ATP-dependent retrieval of resident ER proteins that contain a C-terminal H-D-E-L retention signal from the Golgi to the ER. This chain is Golgi to ER traffic protein 2, found in Kluyveromyces lactis (strain ATCC 8585 / CBS 2359 / DSM 70799 / NBRC 1267 / NRRL Y-1140 / WM37) (Yeast).